Consider the following 124-residue polypeptide: S-adenosylmethionine decarboxylase proenzyme (124 aa).

The active-site Schiff-base intermediate with substrate; via pyruvic acid is serine 63. At serine 63 the chain carries Pyruvic acid (Ser); by autocatalysis. Histidine 68 (proton acceptor; for processing activity) is an active-site residue. The Proton donor; for catalytic activity role is filled by cysteine 83.

The protein belongs to the prokaryotic AdoMetDC family. Type 1 subfamily. As to quaternary structure, heterotetramer of two alpha and two beta chains arranged as a dimer of alpha/beta heterodimers. Requires pyruvate as cofactor. Post-translationally, is synthesized initially as an inactive proenzyme. Formation of the active enzyme involves a self-maturation process in which the active site pyruvoyl group is generated from an internal serine residue via an autocatalytic post-translational modification. Two non-identical subunits are generated from the proenzyme in this reaction, and the pyruvate is formed at the N-terminus of the alpha chain, which is derived from the carboxyl end of the proenzyme. The post-translation cleavage follows an unusual pathway, termed non-hydrolytic serinolysis, in which the side chain hydroxyl group of the serine supplies its oxygen atom to form the C-terminus of the beta chain, while the remainder of the serine residue undergoes an oxidative deamination to produce ammonia and the pyruvoyl group blocking the N-terminus of the alpha chain.

The catalysed reaction is S-adenosyl-L-methionine + H(+) = S-adenosyl 3-(methylsulfanyl)propylamine + CO2. The protein operates within amine and polyamine biosynthesis; S-adenosylmethioninamine biosynthesis; S-adenosylmethioninamine from S-adenosyl-L-methionine: step 1/1. Catalyzes the decarboxylation of S-adenosylmethionine to S-adenosylmethioninamine (dcAdoMet), the propylamine donor required for the synthesis of the polyamines spermine and spermidine from the diamine putrescine. The chain is S-adenosylmethionine decarboxylase proenzyme from Geobacillus sp. (strain WCH70).